The following is a 267-amino-acid chain: Luciferase (267 aa).

Residue Asn-4 is glycosylated (N-linked (GlcNAc...) asparagine). The chain crosses the membrane as a helical span at residues 17-39 (LSSRSIAITCGVVLASAIAFPII).

The protein belongs to the fungal luciferase family.

Its subcellular location is the membrane. It carries out the reaction 3-hydroxyhispidin + O2 = (E)-caffeoylpyruvate + hnu + CO2. The catalysed reaction is 3-hydroxyhispidin + O2 = 4-[(E)-2-(3,4-dihydroxyphenyl)ethenyl]-1,7-dihydroxy-2,3,5-trioxabicyclo[2.2.2]oct-7-en-6-one. Functionally, luciferase; part of the gene cluster that mediates the fungal bioluminescence cycle. Uses the fungal luciferin 3-hydroxyhispidin as a substrate to produce an endoperoxide as a high-energy intermediate with decomposition that yields oxyluciferin (also known as caffeoylpyruvate) and light emission. The fungal bioluminescence cycle begins with the hispidin synthetase that catalyzes the formation of hispidin which is further hydroxylated by the hispidin-3-hydroxylase, yielding the fungal luciferin 3-hydroxyhispidin. The luciferase then produces an endoperoxide as a high-energy intermediate with decomposition that yields oxyluciferin and light emission. Oxyluciferin can be recycled to caffeic acid by caffeoylpyruvate hydrolase. This chain is Luciferase, found in Neonothopanus nambi (Agaricus nambi).